The sequence spans 467 residues: Microtubule-associated tyrosine carboxypeptidase 1 (467 aa).

Residues 1–10 (MVLDSGTQVY) are compositionally biased toward polar residues. Disordered stretches follow at residues 1–40 (MVLD…PLYP) and 77–111 (MRRS…TLRP). Zn(2+) is bound at residue His276. Glu277 acts as the Nucleophile in catalysis. His281 and Glu312 together coordinate Zn(2+).

The protein belongs to the peptidase MATCAP family. It depends on Zn(2+) as a cofactor.

It localises to the cytoplasm. It is found in the cytoskeleton. The catalysed reaction is C-terminal L-alpha-aminoacyl-L-glutamyl-L-glutamyl-L-tyrosyl-[tubulin] + H2O = C-terminal L-alpha-aminoacyl-L-glutamyl-L-glutamyl-[tubulin] + L-tyrosine. It carries out the reaction C-terminal L-alpha-aminoacyl-L-glutamyl-L-glutamyl-L-phenylalanyl-[tubulin] + H2O = C-terminal L-alpha-aminoacyl-L-glutamyl-L-glutamyl-[tubulin] + L-phenylalanine. Tyrosine carboxypeptidase that removes the C-terminal tyrosine residue of alpha-tubulin, thereby regulating microtubule dynamics and function. Also able to remove the C-terminal phenylalanine residue of alpha-tubulin TUBA8. Recognizes adjacent tubulin dimers along the same protofilament. The sequence is that of Microtubule-associated tyrosine carboxypeptidase 1 from Mus musculus (Mouse).